The sequence spans 379 residues: Succinyl-diaminopimelate desuccinylase (379 aa).

Histidine 68 is a Zn(2+) binding site. The active site involves aspartate 70. Aspartate 101 lines the Zn(2+) pocket. The active-site Proton acceptor is the glutamate 135. 3 residues coordinate Zn(2+): glutamate 136, glutamate 164, and histidine 350.

The protein belongs to the peptidase M20A family. DapE subfamily. Homodimer. Zn(2+) is required as a cofactor. Co(2+) serves as cofactor.

It catalyses the reaction N-succinyl-(2S,6S)-2,6-diaminopimelate + H2O = (2S,6S)-2,6-diaminopimelate + succinate. Its pathway is amino-acid biosynthesis; L-lysine biosynthesis via DAP pathway; LL-2,6-diaminopimelate from (S)-tetrahydrodipicolinate (succinylase route): step 3/3. Functionally, catalyzes the hydrolysis of N-succinyl-L,L-diaminopimelic acid (SDAP), forming succinate and LL-2,6-diaminopimelate (DAP), an intermediate involved in the bacterial biosynthesis of lysine and meso-diaminopimelic acid, an essential component of bacterial cell walls. This Bordetella pertussis (strain Tohama I / ATCC BAA-589 / NCTC 13251) protein is Succinyl-diaminopimelate desuccinylase.